The primary structure comprises 282 residues: Bifunctional protein FolD 1 (282 aa).

Residues 167 to 169 (GRS) and serine 192 contribute to the NADP(+) site.

This sequence belongs to the tetrahydrofolate dehydrogenase/cyclohydrolase family. In terms of assembly, homodimer.

The enzyme catalyses (6R)-5,10-methylene-5,6,7,8-tetrahydrofolate + NADP(+) = (6R)-5,10-methenyltetrahydrofolate + NADPH. It carries out the reaction (6R)-5,10-methenyltetrahydrofolate + H2O = (6R)-10-formyltetrahydrofolate + H(+). Its pathway is one-carbon metabolism; tetrahydrofolate interconversion. Catalyzes the oxidation of 5,10-methylenetetrahydrofolate to 5,10-methenyltetrahydrofolate and then the hydrolysis of 5,10-methenyltetrahydrofolate to 10-formyltetrahydrofolate. The polypeptide is Bifunctional protein FolD 1 (Colwellia psychrerythraea (strain 34H / ATCC BAA-681) (Vibrio psychroerythus)).